Consider the following 305-residue polypeptide: Dihydroorotate dehydrogenase B (NAD(+)), catalytic subunit (305 aa).

FMN-binding positions include Ser21 and 45–46 (KG). Substrate-binding positions include Lys45 and 69 to 73 (NAVGL). Residues Asn99 and Asn127 each contribute to the FMN site. Asn127 contacts substrate. Cys130 (nucleophile) is an active-site residue. Lys165 and Ile191 together coordinate FMN. Residue 192–193 (NT) coordinates substrate. Residues Gly217, 243–244 (GG), and 265–266 (GT) contribute to the FMN site.

The protein belongs to the dihydroorotate dehydrogenase family. Type 1 subfamily. In terms of assembly, heterotetramer of 2 PyrK and 2 PyrD type B subunits. The cofactor is FMN.

The protein localises to the cytoplasm. The catalysed reaction is (S)-dihydroorotate + NAD(+) = orotate + NADH + H(+). It functions in the pathway pyrimidine metabolism; UMP biosynthesis via de novo pathway; orotate from (S)-dihydroorotate (NAD(+) route): step 1/1. Catalyzes the conversion of dihydroorotate to orotate with NAD(+) as electron acceptor. In Parabacteroides distasonis (strain ATCC 8503 / DSM 20701 / CIP 104284 / JCM 5825 / NCTC 11152), this protein is Dihydroorotate dehydrogenase B (NAD(+)), catalytic subunit (pyrD).